The chain runs to 172 residues: Photosystem I assembly protein Ycf3 (172 aa).

3 TPR repeats span residues 35 to 70 (AFTY…EIDP), 74 to 107 (SYIL…NPFL), and 122 to 155 (GEQA…TPGN).

It belongs to the Ycf3 family.

It is found in the plastid. The protein localises to the chloroplast thylakoid membrane. Essential for the assembly of the photosystem I (PSI) complex. May act as a chaperone-like factor to guide the assembly of the PSI subunits. The polypeptide is Photosystem I assembly protein Ycf3 (Sorghum bicolor (Sorghum)).